A 293-amino-acid chain; its full sequence is Aquaporin-6 (293 aa).

The Cytoplasmic portion of the chain corresponds to 1–22; sequence MEPGLCSRAYLLVGGLWTAISK. The helical transmembrane segment at 23–43 threads the bilayer; the sequence is ALFAEFLATGLYVFFGVGSVL. Residues 44-51 are Extracellular-facing; that stretch reads PWPVALPS. The chain crosses the membrane as a helical span at residues 52–70; it reads VLQIAITFNLATATAVQIS. Over 71–75 the chain is Cytoplasmic; that stretch reads WKTSG. Positions 76–85 form an intramembrane region, discontinuously helical; that stretch reads AHANPAVTLA. The NPA 1 motif lies at 79–81; that stretch reads NPA. Residues 86 to 96 lie on the Cytoplasmic side of the membrane; the sequence is YLVGSHISLPR. The chain crosses the membrane as a helical span at residues 97–118; sequence AMAYIAAQLAGATAGAALLYGV. Residues 119 to 138 lie on the Extracellular side of the membrane; sequence TPGGIRETLGVNVVHNSTST. The N-linked (GlcNAc...) asparagine glycan is linked to N134. The helical transmembrane segment at 139–159 threads the bilayer; that stretch reads GQAVAVELVLTLQLVLCVFAS. The Cytoplasmic portion of the chain corresponds to 160–165; that stretch reads MDGRQT. Residues 166 to 185 traverse the membrane as a helical segment; that stretch reads LASPAAMIGTSVALGHLIGI. Residues 186–189 are Extracellular-facing; that stretch reads YFTG. An intramembrane region (discontinuously helical) is located at residues 190 to 202; it reads CSMNPARSFGPAV. An NPA 2 motif is present at residues 193–195; it reads NPA. The Extracellular segment spans residues 203–210; that stretch reads IVGKFAVH. Residues 211–231 form a helical membrane-spanning segment; sequence WIFWVGPLTGAVLASLIYNFI. Topologically, residues 232 to 293 are cytoplasmic; that stretch reads LFPDTKTVAQ…RSFSFTLGLC (62 aa).

Belongs to the MIP/aquaporin (TC 1.A.8) family. As to quaternary structure, homotetramer; each monomer provides an independent solute pore.

Its subcellular location is the cytoplasmic vesicle membrane. The catalysed reaction is nitrate(in) = nitrate(out). The enzyme catalyses iodide(out) = iodide(in). It carries out the reaction bromide(in) = bromide(out). It catalyses the reaction chloride(in) = chloride(out). The catalysed reaction is Na(+)(in) = Na(+)(out). The enzyme catalyses H2O(in) = H2O(out). It carries out the reaction CO2(out) = CO2(in). It catalyses the reaction NH4(+)(in) = NH4(+)(out). Its function is as follows. Aquaporins form homotetrameric transmembrane channels, with each monomer independently mediating water transport across the plasma membrane along its osmotic gradient. Unlike classical aquaporins, AQP6 is an intracellular channel with selective anion permeability, particularly for nitrate, and exhibits very low water permeability. It may also facilitate the transport of gases, such as CO2 and NH4(+), as demonstrated in vitro. This chain is Aquaporin-6, found in Mus musculus (Mouse).